Reading from the N-terminus, the 344-residue chain is Dihydroorotase (344 aa).

2 residues coordinate Zn(2+): histidine 13 and histidine 15. Substrate-binding positions include 15–17 (HFR) and asparagine 41. 3 residues coordinate Zn(2+): lysine 98, histidine 135, and histidine 173. Position 98 is an N6-carboxylysine (lysine 98). Residue histidine 135 participates in substrate binding. Leucine 218 is a binding site for substrate. Aspartate 246 contributes to the Zn(2+) binding site. Aspartate 246 is a catalytic residue. Substrate-binding residues include histidine 250 and alanine 262.

Belongs to the metallo-dependent hydrolases superfamily. DHOase family. Class II DHOase subfamily. In terms of assembly, homodimer. Zn(2+) is required as a cofactor.

It carries out the reaction (S)-dihydroorotate + H2O = N-carbamoyl-L-aspartate + H(+). The protein operates within pyrimidine metabolism; UMP biosynthesis via de novo pathway; (S)-dihydroorotate from bicarbonate: step 3/3. In terms of biological role, catalyzes the reversible cyclization of carbamoyl aspartate to dihydroorotate. The protein is Dihydroorotase of Pseudoalteromonas atlantica (strain T6c / ATCC BAA-1087).